The following is a 350-amino-acid chain: MATTATPEYGWWAGNSRFALQSGKWLSAHIAQYALITFWAGGITLFELARYNPDVSMGEQGLILIPHLATLGWGIGSGGQVVDTYPYFVIGVIHLVASAVFGAGALYHALKGPEDLSQSDFEFAKNFHFEWDDAAKLGNILGHHLLTLGYAALLFVIWLRFHGVYDSTIGEVRVVTNPGATILSVLFEYGWFTPDHNPYFVNNLEDLASGHAYIAVVLLAGGFWHINQAPFPWAQRLLASLFSPEGLLSASLAGLSMAGFAAAYFSAVNTLAYPVEFFGPPLELKFSVAPYFVDTIDLPNGAHTARAWLCNVHFFLAFFVLQGHLWHALRALGFDFKRIPQALGSLSGEA.

The next 6 helical transmembrane spans lie at 26-46 (LSAH…ITLF), 62-82 (LILI…GQVV), 87-107 (YFVI…GALY), 214-234 (IAVV…FPWA), 248-268 (LSAS…FSAV), and 309-329 (LCNV…WHAL).

The protein belongs to the PsbB/PsbC family. IsiA/Pcb subfamily. The antenna complex consists of chlorophylls (a and b) and chlorophyll a/b binding proteins. Requires chlorophyll a as cofactor. The cofactor is chlorophyll b.

It is found in the cellular thylakoid membrane. In terms of biological role, the antenna complex functions as a light receptor, it captures and delivers excitation energy to photosystems II and I. The Prochlorales pcb genes are not related to higher plant LHCs. The chain is Chlorophyll a/b light-harvesting protein PcbA (pcbA) from Prochlorothrix hollandica.